The following is a 255-amino-acid chain: 7alpha-hydroxysteroid dehydrogenase (255 aa).

NAD(+) is bound by residues Ile-23, 42-43 (DI), 68-69 (DI), and Asn-95. 4 residues coordinate glycochenodeoxycholate: Gly-99, Ser-146, Asn-151, and Tyr-159. Residues Tyr-159, Lys-163, and 192 to 194 (ILT) each bind NAD(+). The active-site Proton acceptor is Tyr-159.

This sequence belongs to the short-chain dehydrogenases/reductases (SDR) family. Homotetramer.

It catalyses the reaction cholate + NAD(+) = 3alpha,12alpha-dihydroxy-7-oxo-5beta-cholanate + NADH + H(+). It carries out the reaction chenodeoxycholate + NAD(+) = 7-oxolithocholate + NADH + H(+). The catalysed reaction is taurochenodeoxycholate + NAD(+) = 7-oxotaurolithocholate + NADH + H(+). The enzyme catalyses taurocholate + NAD(+) = 7-oxo-taurodeoxycholate + NADH + H(+). It catalyses the reaction glycocholate + NAD(+) = 7-oxo-glycodeoxycholate + NADH + H(+). It carries out the reaction glycochenodeoxycholate + NAD(+) = 7-oxoglycolithocholate + NADH + H(+). Its function is as follows. 7alpha-hydroxysteroid dehydrogenase involved in the metabolism of bile acids. Catalyzes the NAD(+)-dependent oxidation of the 7alpha-hydroxy group of 7alpha-hydroxysteroids, such as the major human bile acids cholate and chenodeoxycholate, to the corresponding 7-oxosteroids. To a lesser extent, can also act on taurochenodeoxycholate, taurocholate and glycocholate. Can also use glycochenodeoxycholate as substrate. Is not able to use NADP(+) instead of NAD(+) as the electron acceptor. The polypeptide is 7alpha-hydroxysteroid dehydrogenase (hdhA) (Escherichia coli O157:H7).